We begin with the raw amino-acid sequence, 147 residues long: MLMPKRVKRRKVQRGRMKGKATRGNFIAYGDFGIQATECGWITSNQIEAARIAINRYVKRGGKVWIKIFPDKPVTEKPAETRMGSGKGSPEYWVAVVKPGRVLFEISGVSETVAREAMRLASHKLPVKTKFVTRRDFEEMGGEVNEG.

It belongs to the universal ribosomal protein uL16 family. In terms of assembly, part of the 50S ribosomal subunit.

Binds 23S rRNA and is also seen to make contacts with the A and possibly P site tRNAs. This chain is Large ribosomal subunit protein uL16, found in Clostridium botulinum (strain ATCC 19397 / Type A).